Consider the following 613-residue polypeptide: Portal protein (613 aa).

Residues 577–613 (ATGGDHGIRQAPSARGDTEPDHAKSKPARDPPPGAGS) are disordered. Residues 592-605 (GDTEPDHAKSKPAR) show a composition bias toward basic and acidic residues.

It belongs to the herpesviridae portal protein family. Homododecamerizes. Interacts with terminase subunits TRM1 and TRM3.

It is found in the virion. The protein localises to the host nucleus. Its subcellular location is the host cytoplasm. Forms a portal in the viral capsid through which viral DNA is translocated during DNA packaging. Assembles as a dodecamer at a single fivefold axe of the T=16 icosahedric capsid. Binds to the molecular motor that translocates the viral DNA, termed terminase. The chain is Portal protein from Epstein-Barr virus (strain B95-8) (HHV-4).